A 175-amino-acid polypeptide reads, in one-letter code: Protein-export protein SecB (175 aa).

Belongs to the SecB family. Homotetramer, a dimer of dimers. One homotetramer interacts with 1 SecA dimer.

It localises to the cytoplasm. Its function is as follows. One of the proteins required for the normal export of preproteins out of the cell cytoplasm. It is a molecular chaperone that binds to a subset of precursor proteins, maintaining them in a translocation-competent state. It also specifically binds to its receptor SecA. The chain is Protein-export protein SecB from Ehrlichia chaffeensis (strain ATCC CRL-10679 / Arkansas).